The following is a 593-amino-acid chain: Isocitrate dehydrogenase kinase/phosphatase (593 aa).

ATP-binding positions include 324 to 330 (APGIRGL) and Lys-345. The active site involves Asp-380.

It belongs to the AceK family.

The protein localises to the cytoplasm. It catalyses the reaction L-seryl-[isocitrate dehydrogenase] + ATP = O-phospho-L-seryl-[isocitrate dehydrogenase] + ADP + H(+). Functionally, bifunctional enzyme which can phosphorylate or dephosphorylate isocitrate dehydrogenase (IDH) on a specific serine residue. This is a regulatory mechanism which enables bacteria to bypass the Krebs cycle via the glyoxylate shunt in response to the source of carbon. When bacteria are grown on glucose, IDH is fully active and unphosphorylated, but when grown on acetate or ethanol, the activity of IDH declines drastically concomitant with its phosphorylation. This is Isocitrate dehydrogenase kinase/phosphatase from Dechloromonas aromatica (strain RCB).